Consider the following 994-residue polypeptide: Poly [ADP-ribose] polymerase (994 aa).

2 consecutive PARP-type zinc fingers follow at residues 7–89 and 111–200; these read YLAE…ENIQ and FGIE…PPIK. 8 residues coordinate Zn(2+): Cys-19, Cys-22, His-51, Cys-54, Cys-123, Cys-126, His-158, and Cys-161. The disordered stretch occupies residues 199-225; the sequence is IKSEELPDTKRAKMELSDTNEEGEKKQ. The segment covering 200–225 has biased composition (basic and acidic residues); sequence KSEELPDTKRAKMELSDTNEEGEKKQ. 2 short sequence motifs (nuclear localization signal) span residues 208-210 and 223-228; these read KRA and KKQRLK. Residues 214 to 354 enclose the PADR1 zinc-binding domain; the sequence is LSDTNEEGEK…STRIFNNFPP (141 aa). Residues 280–323 form a zinc ribbon region; the sequence is GAIESCSECNSCQFIVNKSGYICNGNHSEWTKCNKLLKEPTRSA. The Zn(2+) site is built by Cys-285, Cys-288, Cys-302, and Cys-312. Residues 368 to 507 are automodification domain; sequence KNNDVLVRPT…YTKSMPVSRT (140 aa). The 92-residue stretch at 380–471 folds into the BRCT domain; that stretch reads RISPPLYNLK…EGAIKYINST (92 aa). The 98-residue stretch at 525–622 folds into the WGR domain; that stretch reads IAHVYVDSNN…DNFVKRTGRM (98 aa). Positions 644–761 constitute a PARP alpha-helical domain; that stretch reads TSKLEISVQN…EIEVAYSIIK (118 aa). One can recognise a PARP catalytic domain in the interval 770-994; that stretch reads NPLDNHYAQI…LFRMEFKYSY (225 aa). Catalysis depends on Glu-971, which acts as the For poly [ADP-ribose] polymerase activity.

It belongs to the ARTD/PARP family. As to expression, expressed in adult female oocytes, anal plates of stage 12 embryos and in cells around the central nervous system in later embryos.

It is found in the nucleus. It localises to the chromosome. The protein localises to the nucleolus. The catalysed reaction is NAD(+) + (ADP-D-ribosyl)n-acceptor = nicotinamide + (ADP-D-ribosyl)n+1-acceptor + H(+).. It carries out the reaction L-seryl-[protein] + NAD(+) = O-(ADP-D-ribosyl)-L-seryl-[protein] + nicotinamide + H(+). The enzyme catalyses L-aspartyl-[protein] + NAD(+) = 4-O-(ADP-D-ribosyl)-L-aspartyl-[protein] + nicotinamide. It catalyses the reaction L-glutamyl-[protein] + NAD(+) = 5-O-(ADP-D-ribosyl)-L-glutamyl-[protein] + nicotinamide. In terms of biological role, poly-ADP-ribosyltransferase that mediates poly-ADP-ribosylation of proteins and plays a key role in DNA repair. Mediates glutamate, aspartate or serine ADP-ribosylation of proteins: the ADP-D-ribosyl group of NAD(+) is transferred to the acceptor carboxyl group of target residues and further ADP-ribosyl groups are transferred to the 2'-position of the terminal adenosine moiety, building up a polymer with an average chain length of 20-30 units. Mainly mediates glutamate and aspartate ADP-ribosylation of target proteins in absence of CG1218/HPF1. Following interaction with CG1218/HPF1, catalyzes serine ADP-ribosylation of target proteins; CG1218/HPF1 conferring serine specificity by completing the Parp active site. Its function is as follows. Plays a fundamental role in organizing chromatin on a global scale. Autoregulates Parp transcription by influencing the chromatin structure of its heterochromatic environment. The chain is Poly [ADP-ribose] polymerase (Parp) from Drosophila melanogaster (Fruit fly).